A 229-amino-acid polypeptide reads, in one-letter code: Potassium/proton antiporter CemA (229 aa).

3 helical membrane-spanning segments follow: residues 6–26 (AFIP…ISLS), 114–134 (ILCF…LLII), and 189–209 (IISG…KYWI).

This sequence belongs to the CemA family.

It is found in the plastid. It localises to the chloroplast inner membrane. It catalyses the reaction K(+)(in) + H(+)(out) = K(+)(out) + H(+)(in). Contributes to K(+)/H(+) antiport activity by supporting proton efflux to control proton extrusion and homeostasis in chloroplasts in a light-dependent manner to modulate photosynthesis. Prevents excessive induction of non-photochemical quenching (NPQ) under continuous-light conditions. Indirectly promotes efficient inorganic carbon uptake into chloroplasts. This is Potassium/proton antiporter CemA from Carica papaya (Papaya).